The chain runs to 705 residues: Elongation factor G (705 aa).

The tr-type G domain occupies 7-287 (HLTRNIGIMA…YVCAFLPSPL (281 aa)). GTP is bound by residues 16-23 (AHIDAGKT), 84-88 (DTPGH), and 138-141 (NKMD).

It belongs to the TRAFAC class translation factor GTPase superfamily. Classic translation factor GTPase family. EF-G/EF-2 subfamily.

Its subcellular location is the cytoplasm. Its function is as follows. Catalyzes the GTP-dependent ribosomal translocation step during translation elongation. During this step, the ribosome changes from the pre-translocational (PRE) to the post-translocational (POST) state as the newly formed A-site-bound peptidyl-tRNA and P-site-bound deacylated tRNA move to the P and E sites, respectively. Catalyzes the coordinated movement of the two tRNA molecules, the mRNA and conformational changes in the ribosome. This chain is Elongation factor G, found in Bacteroides thetaiotaomicron (strain ATCC 29148 / DSM 2079 / JCM 5827 / CCUG 10774 / NCTC 10582 / VPI-5482 / E50).